The chain runs to 242 residues: Guanylate kinase (242 aa).

In terms of domain architecture, Guanylate kinase-like spans 22–200 (GLLIVMTGAS…AVRELQAVQR (179 aa)). 29 to 36 (GASGVGKG) lines the ATP pocket.

This sequence belongs to the guanylate kinase family.

The protein localises to the cytoplasm. The enzyme catalyses GMP + ATP = GDP + ADP. Essential for recycling GMP and indirectly, cGMP. In Deinococcus geothermalis (strain DSM 11300 / CIP 105573 / AG-3a), this protein is Guanylate kinase.